We begin with the raw amino-acid sequence, 695 residues long: Protein arginine N-methyltransferase 7 (695 aa).

2 consecutive SAM-dependent MTase PRMT-type domains span residues 14–345 (SVEW…YCVW) and 358–684 (RVHP…ITMD). Arg-32 is subject to Omega-N-methylarginine. Catalysis depends on residues Glu-144 and Glu-153.

Belongs to the class I-like SAM-binding methyltransferase superfamily. Protein arginine N-methyltransferase family. PRMT7 subfamily. In terms of assembly, homodimer and heterodimer. Interacts with CTCFL, PRMT5 and SNRPD3.

The protein resides in the cytoplasm. The protein localises to the cytosol. It is found in the nucleus. It carries out the reaction L-arginyl-[protein] + S-adenosyl-L-methionine = N(omega)-methyl-L-arginyl-[protein] + S-adenosyl-L-homocysteine + H(+). Functionally, arginine methyltransferase that can both catalyze the formation of omega-N monomethylarginine (MMA) and symmetrical dimethylarginine (sDMA), with a preference for the formation of MMA. Specifically mediates the symmetrical dimethylation of arginine residues in the small nuclear ribonucleoproteins Sm D1 (SNRPD1) and Sm D3 (SNRPD3); such methylation being required for the assembly and biogenesis of snRNP core particles. Specifically mediates the symmetric dimethylation of histone H4 'Arg-3' to form H4R3me2s. Plays a role in gene imprinting by being recruited by CTCFL at the H19 imprinted control region (ICR) and methylating histone H4 to form H4R3me2s, possibly leading to recruit DNA methyltransferases at these sites. May also play a role in embryonic stem cell (ESC) pluripotency. Also able to mediate the arginine methylation of histone H2A and myelin basic protein (MBP) in vitro; the relevance of such results is however unclear in vivo. The chain is Protein arginine N-methyltransferase 7 (PRMT7) from Bos taurus (Bovine).